Here is a 472-residue protein sequence, read N- to C-terminus: Eukaryotic translation initiation factor 2 subunit 3 (472 aa).

At A2 the chain carries N-acetylalanine. S16 is subject to Phosphoserine. The 210-residue stretch at 39–248 (QATINIGTIG…IVKKIPVPPR (210 aa)) folds into the tr-type G domain. A G1 region spans residues 48–55 (GHVAHGKS). 51–56 (AHGKST) provides a ligand contact to GTP. The segment at 76 to 80 (NITIK) is G2. The tract at residues 134–137 (DCPG) is G3. GTP contacts are provided by residues 190–193 (NKID) and 225–227 (SAQ). Residues 190–193 (NKID) form a G4 region. Residues 225–227 (SAQ) are G5. The tract at residues 457–469 (GQIRRGVTIKPTV) is interacts with CDC123.

Belongs to the TRAFAC class translation factor GTPase superfamily. Classic translation factor GTPase family. EIF2G subfamily. Eukaryotic translation initiation factor 2 eIF2 is a heterotrimeric complex composed of an alpha (EIF2S1), a beta (EIF2S2) and a gamma (EIF2S3) chain. eIF2 is member of the 43S pre-initiation complex (43S PIC). Interacts (via C-terminus) with CDC123; the interaction is direct.

It localises to the cytoplasm. It is found in the cytosol. It catalyses the reaction GTP + H2O = GDP + phosphate + H(+). Member of the eIF2 complex that functions in the early steps of protein synthesis by forming a ternary complex with GTP and initiator tRNA. This complex binds to a 40S ribosomal subunit, followed by mRNA binding to form the 43S pre-initiation complex (43S PIC). Junction of the 60S ribosomal subunit to form the 80S initiation complex is preceded by hydrolysis of the GTP bound to eIF2 and release of an eIF2-GDP binary complex. In order for eIF2 to recycle and catalyze another round of initiation, the GDP bound to eIF2 must exchange with GTP by way of a reaction catalyzed by eIF-2B. The protein is Eukaryotic translation initiation factor 2 subunit 3 (EIF2S3) of Sus scrofa (Pig).